The following is a 160-amino-acid chain: Thy-1 membrane glycoprotein (160 aa).

Positions 1 to 19 are cleaved as a signal peptide; it reads MNPTVSIAVILTVLQAAHC. At Q20 the chain carries Pyrrolidone carboxylic acid. An Ig-like V-type domain is found at 20 to 120; that stretch reads QMIRDLSACL…YTGNQIKNIT (101 aa). 2 disulfides stabilise this stretch: C28–C129 and C38–C103. 3 N-linked (GlcNAc...) asparagine glycosylation sites follow: N42, N78, and N118. C129 carries the GPI-anchor amidated cysteine lipid modification. A propeptide spans 130 to 160 (removed in mature form); it reads VRLSLLIQNTSWLLLLLLSLPLLQAVDFVSL. N138 carries N-linked (GlcNAc...) asparagine glycosylation.

In terms of processing, the N-terminus is blocked. As to expression, forebrain, cerebellum and tectum.

It is found in the cell membrane. May play a role in cell-cell or cell-ligand interactions during synaptogenesis and other events in the brain. The protein is Thy-1 membrane glycoprotein (THY1) of Gallus gallus (Chicken).